Here is a 397-residue protein sequence, read N- to C-terminus: Ribosomal RNA processing protein 1 homolog (397 aa).

The segment covering E334 to N343 has biased composition (basic and acidic residues). The segment at E334–P366 is disordered.

Belongs to the RRP1 family.

The protein resides in the nucleus. May be involved in the generation of 28S rRNA. This is Ribosomal RNA processing protein 1 homolog from Caenorhabditis elegans.